Here is a 200-residue protein sequence, read N- to C-terminus: Mediator of RNA polymerase II transcription subunit 29 (200 aa).

2 stretches are compositionally biased toward low complexity: residues 1–20 (MAASQQQASATTSTASVSGP) and 36–48 (AQLVGPAQSGLLQ). Positions 1–48 (MAASQQQASATTSTASVSGPGSAGGSGPQQQPQPPAQLVGPAQSGLLQ) are disordered. At alanine 2 the chain carries N-acetylalanine.

This sequence belongs to the Mediator complex subunit 29 family. As to quaternary structure, component of the TRAP/SMCC mediator complex. Interacts with MED20/TRFP. Associates with the MED18-MED20 heteromer.

It localises to the nucleus. In terms of biological role, component of the mediator complex, a complex that can either repress or activate transcription. Mediator complexes are essential for basal and regulated expression of nearly all RNA polymerase II-dependent genes. They may act as a bridge, conveying regulatory information from enhancers and other control elements to the promoter. In Bos taurus (Bovine), this protein is Mediator of RNA polymerase II transcription subunit 29 (MED29).